The following is a 485-amino-acid chain: N-succinylglutamate 5-semialdehyde dehydrogenase (485 aa).

220–225 serves as a coordination point for NAD(+); that stretch reads GSANTG. Residues Glu243 and Cys278 contribute to the active site.

It belongs to the aldehyde dehydrogenase family. AstD subfamily.

The catalysed reaction is N-succinyl-L-glutamate 5-semialdehyde + NAD(+) + H2O = N-succinyl-L-glutamate + NADH + 2 H(+). It participates in amino-acid degradation; L-arginine degradation via AST pathway; L-glutamate and succinate from L-arginine: step 4/5. In terms of biological role, catalyzes the NAD-dependent reduction of succinylglutamate semialdehyde into succinylglutamate. The chain is N-succinylglutamate 5-semialdehyde dehydrogenase from Aliivibrio fischeri (strain ATCC 700601 / ES114) (Vibrio fischeri).